Here is a 269-residue protein sequence, read N- to C-terminus: Hydroxyethylthiazole kinase (269 aa).

Methionine 42 serves as a coordination point for substrate. Arginine 118 and serine 164 together coordinate ATP. Glycine 191 serves as a coordination point for substrate.

It belongs to the Thz kinase family. It depends on Mg(2+) as a cofactor.

The enzyme catalyses 5-(2-hydroxyethyl)-4-methylthiazole + ATP = 4-methyl-5-(2-phosphooxyethyl)-thiazole + ADP + H(+). It participates in cofactor biosynthesis; thiamine diphosphate biosynthesis; 4-methyl-5-(2-phosphoethyl)-thiazole from 5-(2-hydroxyethyl)-4-methylthiazole: step 1/1. Functionally, catalyzes the phosphorylation of the hydroxyl group of 4-methyl-5-beta-hydroxyethylthiazole (THZ). The protein is Hydroxyethylthiazole kinase of Listeria monocytogenes serovar 1/2a (strain ATCC BAA-679 / EGD-e).